The chain runs to 67 residues: Probable Sec-independent protein translocase protein TatE (67 aa).

A helical transmembrane segment spans residues 1 to 21; it reads MEGISIAKLLIIGALIVLLFG. A disordered region spans residues 44-67; sequence KDEDTSAARTTAEETPAERVSHKD.

Belongs to the TatA/E family. TatE subfamily.

The protein resides in the cell inner membrane. Part of the twin-arginine translocation (Tat) system that transports large folded proteins containing a characteristic twin-arginine motif in their signal peptide across membranes. TatE shares overlapping functions with TatA. This chain is Probable Sec-independent protein translocase protein TatE, found in Pantoea ananatis (strain LMG 20103).